Here is a 223-residue protein sequence, read N- to C-terminus: Deoxyribose-phosphate aldolase (223 aa).

Catalysis depends on Asp-91, which acts as the Proton donor/acceptor. Catalysis depends on Lys-153, which acts as the Schiff-base intermediate with acetaldehyde. Lys-182 functions as the Proton donor/acceptor in the catalytic mechanism.

This sequence belongs to the DeoC/FbaB aldolase family. DeoC type 1 subfamily.

It localises to the cytoplasm. It carries out the reaction 2-deoxy-D-ribose 5-phosphate = D-glyceraldehyde 3-phosphate + acetaldehyde. The protein operates within carbohydrate degradation; 2-deoxy-D-ribose 1-phosphate degradation; D-glyceraldehyde 3-phosphate and acetaldehyde from 2-deoxy-alpha-D-ribose 1-phosphate: step 2/2. Its function is as follows. Catalyzes a reversible aldol reaction between acetaldehyde and D-glyceraldehyde 3-phosphate to generate 2-deoxy-D-ribose 5-phosphate. The protein is Deoxyribose-phosphate aldolase of Streptococcus pyogenes serotype M12 (strain MGAS2096).